Here is a 2527-residue protein sequence, read N- to C-terminus: Highly reducing polyketide synthase poxF (2527 aa).

The 426-residue stretch at 20-445 folds into the Ketosynthase family 3 (KS3) domain; that stretch reads VMPIAIIGMA…GANAHVIVES (426 aa). Active-site for beta-ketoacyl synthase activity residues include cysteine 193, histidine 328, and histidine 368. Positions 560-882 are malonyl-CoA:ACP transacylase (MAT) domain; the sequence is VFTGQGAQWF…TYASCLSRGQ (323 aa). Residues 951–1086 form an N-terminal hotdog fold region; sequence HDLLGVPAAG…GLCCTPSPAQ (136 aa). Residues 951–1243 form a dehydratase (DH) domain region; it reads HDLLGVPAAG…SVRVINNAGT (293 aa). A PKS/mFAS DH domain is found at 951 to 1270; it reads HDLLGVPAAG…CQSLGSSAVV (320 aa). Catalysis depends on histidine 983, which acts as the Proton acceptor; for dehydratase activity. The C-terminal hotdog fold stretch occupies residues 1108–1270; sequence AWRILNPADT…CQSLGSSAVV (163 aa). Aspartate 1174 serves as the catalytic Proton donor; for dehydratase activity. Residues 1406–1587 form a methyltransferase (CMet) domain region; sequence EDQAEWSSVS…RLLAKAGFEP (182 aa). The segment at 1823–2137 is enoyl reductase (ER) (ER) domain; sequence GLLNSLVFTE…TGKHMGKIVL (315 aa). The ketoreductase (KR) domain stretch occupies residues 2162–2339; the sequence is TYLLVGGVGG…AVSIDLGMVS (178 aa). Positions 2445-2522 constitute a Carrier domain; that stretch reads EVTTLIQSAL…GLAGQMAKKS (78 aa). Serine 2482 carries the O-(pantetheine 4'-phosphoryl)serine modification.

Its pathway is secondary metabolite biosynthesis. Functionally, highly reducing polyketide synthase; part of the gene cluster that mediates the biosynthesis of oxaleimides, cytotoxic compounds containing an unusual disubstituted succinimide moiety. The first step of the pathway is provided by the HR-PKS poxF that serves in a new mode of collaborative biosynthesis with the PKS-NRPS poxE, by providing the olefin containing amino acid substrate via the synthesis of an ACP-bound dec-4-enoate. The cytochrome P450 monooxygenase poxM-catalyzed oxidation at the alpha-position creates the enzyme-bound 2-hydroxydec-4-enoyl-ACP thioester, which may be prone to spontaneous hydrolysis to yield 2-hydroxydec-4-enoic acid due to increased electrophilicity of the carbonyl. 2-hydroxydec-4-enoic acid can then be further oxidized by poxM to yield the alpha-ketoacid 2-oxodec-4-enoicacid, which is reductively aminated by the aminotransferase poxL to yield (S,E)-2-aminodec-4-enoic acid. The Hybrid PKS-NRPS synthetase poxE then performs condensation between the octaketide product of its PKS modules and the amino group of (S,E)-2-aminodec-4-enoic acid which is activated and incorporated by the adenylation domain. The resulting aminoacyl product can be cyclized by the Diels-Alderase PoxQ and reductively released by the reductive (R) domain of poxE to yield an aldehyde intermediate. The released aldehyde is then substrate for a Knoevenagel condensation by the hydrolyase poxO followed by an oxidation at the 5-position of the pyrrolidone ring. The presence of the olefin from the amino acid building block allows for migration of the substituted allyl group to occur. This allylic transposition reaction takes place in a conjugate addition, semipinacol-like fashion to yield a succinimide intermediate. Iterative two-electron oxidations of the C7 methyl of the succinimide intermediate to the carboxylic acid can be catalyzed by one of two remaining cytochrome P450 monooxygenasess poxC or poxD to yield oxaleimide A. Subsequent oxidation yields the maleimide scaffold oxaleimide I. Both oxaleimide A and oxaleimide I can undergo oxidative modifications in the decalin ring to yield the series of products oxaleimides B to H. The polypeptide is Highly reducing polyketide synthase poxF (Penicillium oxalicum).